The sequence spans 428 residues: Chaperone SurA (428 aa).

The first 13 residues, 1-13 (MLGALLLSGAVHA), serve as a signal peptide directing secretion. 2 consecutive PpiC domains span residues 164–265 (SEEF…KLLE) and 276–375 (RDEV…EVLG). Residues 211–230 (TSSSSENALEGGDMGWRKAA) form a disordered region.

The protein resides in the periplasm. The enzyme catalyses [protein]-peptidylproline (omega=180) = [protein]-peptidylproline (omega=0). Chaperone involved in the correct folding and assembly of outer membrane proteins. Recognizes specific patterns of aromatic residues and the orientation of their side chains, which are found more frequently in integral outer membrane proteins. May act in both early periplasmic and late outer membrane-associated steps of protein maturation. The sequence is that of Chaperone SurA from Pseudomonas syringae pv. syringae (strain B728a).